Here is a 198-residue protein sequence, read N- to C-terminus: MAKATTIKDAIRIFEERKSVVATEAEKVELHGMIPPIEKMDATLSTLKACKHLALSTNNIEKISSLSGMENLRILSLGRNLIKKIENLDAVADTLEELWISYNQIASLSGIEKLVNLRVLYMSNNKITNWGEIDKLAALDKLEDLLLAGNPLYNDYKENNATSEYRIEVVKRLPNLKKLDGMPVDVDEREQANVARGG.

4 LRR repeats span residues 49-70 (ACKH…SGME), 71-92 (NLRI…DAVA), 94-115 (TLEE…EKLV), and 116-137 (NLRV…DKLA). The region spanning 157–195 (KENNATSEYRIEVVKRLPNLKKLDGMPVDVDEREQANVA) is the LRRCT domain.

Belongs to the dynein light chain LC1-type family. As to quaternary structure, interacts with OCAD2, a outer arm dynein heavy chain. Interacts with tubulin (previously called p45) located within the A-tubule of the outer doublets in a ATP-independent manner.

It localises to the cytoplasm. The protein localises to the cytoskeleton. The protein resides in the flagellum axoneme. In terms of biological role, part of the multisubunit axonemal ATPase complexes that generate the force for flagellar motility and govern beat frequency. Component of the outer arm dynein (ODA). May be involved in a mechanosensory feedback mechanism controlling ODA activity based on external conformational cues by tethering the outer arm dynein heavy chain (ODA2) to the A-tubule of the outer doublet microtubules within the axoneme. The protein is Dynein axonemal light chain 1 of Chlamydomonas reinhardtii (Chlamydomonas smithii).